The primary structure comprises 236 residues: MIVFPAVDILGGRCVQLVQGKRETATSYGDPLLCAESWINQGAEALHIVNLDGAFGSSKLNAEKITDVIIRTGVKTQLGGGIRSLDDARSWLDCGVDRIIISTFAADDPECLTILSEEYGSDRIMAGVDARAGEMVTHGWERPAGDFLEWADLFIRKGAGSLLYTNVSVEGLCNGIDPKPIRDLLSTVSVPVVVAGGITSPSDIKILKEADAAGVVLGSALYSGKITLQEALEAAG.

Asp-8 (proton acceptor) is an active-site residue. Asp-129 functions as the Proton donor in the catalytic mechanism.

The protein belongs to the HisA/HisF family.

It is found in the cytoplasm. The catalysed reaction is 1-(5-phospho-beta-D-ribosyl)-5-[(5-phospho-beta-D-ribosylamino)methylideneamino]imidazole-4-carboxamide = 5-[(5-phospho-1-deoxy-D-ribulos-1-ylimino)methylamino]-1-(5-phospho-beta-D-ribosyl)imidazole-4-carboxamide. It functions in the pathway amino-acid biosynthesis; L-histidine biosynthesis; L-histidine from 5-phospho-alpha-D-ribose 1-diphosphate: step 4/9. This is 1-(5-phosphoribosyl)-5-[(5-phosphoribosylamino)methylideneamino] imidazole-4-carboxamide isomerase from Methanospirillum hungatei JF-1 (strain ATCC 27890 / DSM 864 / NBRC 100397 / JF-1).